A 604-amino-acid chain; its full sequence is Elongation factor 4 (604 aa).

The region spanning 8-190 (DKIRNFSIIA…AIVNRLPPPR (183 aa)) is the tr-type G domain. Residues 20-25 (DHGKST) and 137-140 (NKID) each bind GTP.

This sequence belongs to the TRAFAC class translation factor GTPase superfamily. Classic translation factor GTPase family. LepA subfamily.

It is found in the cell inner membrane. It carries out the reaction GTP + H2O = GDP + phosphate + H(+). In terms of biological role, required for accurate and efficient protein synthesis under certain stress conditions. May act as a fidelity factor of the translation reaction, by catalyzing a one-codon backward translocation of tRNAs on improperly translocated ribosomes. Back-translocation proceeds from a post-translocation (POST) complex to a pre-translocation (PRE) complex, thus giving elongation factor G a second chance to translocate the tRNAs correctly. Binds to ribosomes in a GTP-dependent manner. This chain is Elongation factor 4, found in Hyphomonas neptunium (strain ATCC 15444).